A 95-amino-acid polypeptide reads, in one-letter code: Protein TusB (95 aa).

Belongs to the DsrH/TusB family. In terms of assembly, heterohexamer, formed by a dimer of trimers. The hexameric TusBCD complex contains 2 copies each of TusB, TusC and TusD. The TusBCD complex interacts with TusE.

It is found in the cytoplasm. Functionally, part of a sulfur-relay system required for 2-thiolation of 5-methylaminomethyl-2-thiouridine (mnm(5)s(2)U) at tRNA wobble positions. In Escherichia coli O139:H28 (strain E24377A / ETEC), this protein is Protein TusB.